The sequence spans 276 residues: MMPMDWEITFKGITYECINCAYCCSCKGWRIYLNYFDRLKLKDYEYAIEPCEGEFKYRLKVNEKGCVLLNNNLCRIHLEKGYEFKPLMCMIFPFSCMIKWDGTPLLIIKHYCSGIKKGKISKKVVNEAIELIKELYFDMFEEIIENGMEHSSKTEIFENFRVDWEEREDFGRYIFSSKTFDEMFERCREIFGNKINKLNLEEIDEIKNNLQRYNTKENEEEILRYLLELNRREHFRKLPFYREVNKLINIGNYLTKYKNVFKGEGEVDKKLFLNLK.

This is an uncharacterized protein from Methanocaldococcus jannaschii (strain ATCC 43067 / DSM 2661 / JAL-1 / JCM 10045 / NBRC 100440) (Methanococcus jannaschii).